We begin with the raw amino-acid sequence, 234 residues long: Small ribosomal subunit protein uS3 (234 aa).

The KH type-2 domain maps to 39-107 (VRDYLKKKLS…PVHVNIEEVR (69 aa)). The tract at residues 212-234 (EQPAAAEQEKRGKKSGVKHAAAS) is disordered.

It belongs to the universal ribosomal protein uS3 family. As to quaternary structure, part of the 30S ribosomal subunit. Forms a tight complex with proteins S10 and S14.

Its function is as follows. Binds the lower part of the 30S subunit head. Binds mRNA in the 70S ribosome, positioning it for translation. This chain is Small ribosomal subunit protein uS3, found in Thiobacillus denitrificans (strain ATCC 25259 / T1).